Reading from the N-terminus, the 297-residue chain is Ribosomal RNA small subunit methyltransferase A (297 aa).

S-adenosyl-L-methionine contacts are provided by Asn31, Leu33, Gly58, Glu79, Asp104, and Asn129.

The protein belongs to the class I-like SAM-binding methyltransferase superfamily. rRNA adenine N(6)-methyltransferase family. RsmA subfamily.

Its subcellular location is the cytoplasm. The catalysed reaction is adenosine(1518)/adenosine(1519) in 16S rRNA + 4 S-adenosyl-L-methionine = N(6)-dimethyladenosine(1518)/N(6)-dimethyladenosine(1519) in 16S rRNA + 4 S-adenosyl-L-homocysteine + 4 H(+). Functionally, specifically dimethylates two adjacent adenosines (A1518 and A1519) in the loop of a conserved hairpin near the 3'-end of 16S rRNA in the 30S particle. May play a critical role in biogenesis of 30S subunits. In Staphylococcus aureus (strain MRSA252), this protein is Ribosomal RNA small subunit methyltransferase A.